The chain runs to 412 residues: Putative competence-damage inducible protein (412 aa).

Belongs to the CinA family.

The polypeptide is Putative competence-damage inducible protein (Clostridium perfringens (strain 13 / Type A)).